A 198-amino-acid chain; its full sequence is Protein GrpE (198 aa).

Over residues 1 to 27 the composition is skewed to basic and acidic residues; it reads MEERNEQVVEETKEAQTEEATIEKNSE. The disordered stretch occupies residues 1 to 39; it reads MEERNEQVVEETKEAQTEEATIEKNSEESVTEEATEETV. Positions 29–39 are enriched in acidic residues; that stretch reads SVTEEATEETV.

Belongs to the GrpE family. In terms of assembly, homodimer.

Its subcellular location is the cytoplasm. Its function is as follows. Participates actively in the response to hyperosmotic and heat shock by preventing the aggregation of stress-denatured proteins, in association with DnaK and GrpE. It is the nucleotide exchange factor for DnaK and may function as a thermosensor. Unfolded proteins bind initially to DnaJ; upon interaction with the DnaJ-bound protein, DnaK hydrolyzes its bound ATP, resulting in the formation of a stable complex. GrpE releases ADP from DnaK; ATP binding to DnaK triggers the release of the substrate protein, thus completing the reaction cycle. Several rounds of ATP-dependent interactions between DnaJ, DnaK and GrpE are required for fully efficient folding. This is Protein GrpE from Bacillus cytotoxicus (strain DSM 22905 / CIP 110041 / 391-98 / NVH 391-98).